A 285-amino-acid polypeptide reads, in one-letter code: Tyrosine recombinase XerA (285 aa).

Residues 7 to 84 (IVNSDILEEF…ALKSYFKFEG (78 aa)) form the Core-binding (CB) domain. Residues 100 to 274 (SLPKSLTEDE…TTKHLREAIE (175 aa)) enclose the Tyr recombinase domain. Active-site residues include Arg-135, Lys-160, His-226, Arg-229, and His-252. The active-site O-(3'-phospho-DNA)-tyrosine intermediate is Tyr-261.

It belongs to the 'phage' integrase family. XerA subfamily.

It localises to the cytoplasm. Functionally, site-specific tyrosine recombinase, which acts by catalyzing the cutting and rejoining of the recombining DNA molecules. The sequence is that of Tyrosine recombinase XerA from Pyrococcus horikoshii (strain ATCC 700860 / DSM 12428 / JCM 9974 / NBRC 100139 / OT-3).